Reading from the N-terminus, the 108-residue chain is ATP synthase peripheral stalk subunit F6, mitochondrial (108 aa).

The transit peptide at 1 to 32 directs the protein to the mitochondrion; the sequence is MVLQRIFRLSSVLRSAVSVHLKRNIGVTAVAF. N6-acetyllysine is present on residues lysine 41, lysine 46, and lysine 79. Lysine 84, lysine 94, and lysine 99 each carry N6-acetyllysine; alternate. Residues lysine 84, lysine 94, and lysine 99 each carry the N6-succinyllysine; alternate modification. Lysine 105 carries the N6-acetyllysine modification. Serine 108 carries the post-translational modification Phosphoserine.

Belongs to the eukaryotic ATPase subunit F6 family. As to quaternary structure, component of the ATP synthase complex composed at least of ATP5F1A/subunit alpha, ATP5F1B/subunit beta, ATP5MC1/subunit c (homooctomer), MT-ATP6/subunit a, MT-ATP8/subunit 8, ATP5ME/subunit e, ATP5MF/subunit f, ATP5MG/subunit g, ATP5MK/subunit k, ATP5MJ/subunit j, ATP5F1C/subunit gamma, ATP5F1D/subunit delta, ATP5F1E/subunit epsilon, ATP5PF/subunit F6, ATP5PB/subunit b, ATP5PD/subunit d, ATP5PO/subunit OSCP. ATP synthase complex consists of a soluble F(1) head domain (subunits alpha(3) and beta(3)) - the catalytic core - and a membrane F(0) domain - the membrane proton channel (subunits c, a, 8, e, f, g, k and j). These two domains are linked by a central stalk (subunits gamma, delta, and epsilon) rotating inside the F1 region and a stationary peripheral stalk (subunits F6, b, d, and OSCP).

Its subcellular location is the mitochondrion. It is found in the mitochondrion inner membrane. Functionally, subunit F6, of the mitochondrial membrane ATP synthase complex (F(1)F(0) ATP synthase or Complex V) that produces ATP from ADP in the presence of a proton gradient across the membrane which is generated by electron transport complexes of the respiratory chain. ATP synthase complex consist of a soluble F(1) head domain - the catalytic core - and a membrane F(1) domain - the membrane proton channel. These two domains are linked by a central stalk rotating inside the F(1) region and a stationary peripheral stalk. During catalysis, ATP synthesis in the catalytic domain of F(1) is coupled via a rotary mechanism of the central stalk subunits to proton translocation. In vivo, can only synthesize ATP although its ATP hydrolase activity can be activated artificially in vitro. Part of the complex F(0) domain. Part of the complex F(0) domain and the peripheric stalk, which acts as a stator to hold the catalytic alpha(3)beta(3) subcomplex and subunit a/ATP6 static relative to the rotary elements. This Mus musculus (Mouse) protein is ATP synthase peripheral stalk subunit F6, mitochondrial.